Reading from the N-terminus, the 398-residue chain is Lysophospholipid transporter LplT (398 aa).

12 helical membrane-spanning segments follow: residues 19–39 (VIVA…ATLA), 53–73 (VLQM…GQIA), 96–116 (ICLG…AAAY), 139–159 (LMEA…GVLA), 164–184 (IAAL…NLFI), 195–213 (SWQL…VVLW), 227–247 (LFWG…PVAL), 257–277 (YLNA…AKLV), 281–301 (TVSR…MFSL), 304–324 (ALLP…FFVV), 352–372 (NSTM…GVPA), and 373–393 (VATG…LWIW).

It belongs to the major facilitator superfamily. LplT (TC 2.A.1.42) family.

Its subcellular location is the cell inner membrane. In terms of biological role, catalyzes the facilitated diffusion of 2-acyl-glycero-3-phosphoethanolamine (2-acyl-GPE) into the cell. The protein is Lysophospholipid transporter LplT of Salmonella arizonae (strain ATCC BAA-731 / CDC346-86 / RSK2980).